The following is a 256-amino-acid chain: Triosephosphate isomerase (256 aa).

Residue 9-11 coordinates substrate; the sequence is NWK. Catalysis depends on H95, which acts as the Electrophile. E167 acts as the Proton acceptor in catalysis. Residues G173, S212, and 233 to 234 contribute to the substrate site; that span reads GG.

Belongs to the triosephosphate isomerase family. As to quaternary structure, homodimer.

It localises to the cytoplasm. It catalyses the reaction D-glyceraldehyde 3-phosphate = dihydroxyacetone phosphate. The protein operates within carbohydrate biosynthesis; gluconeogenesis. Its pathway is carbohydrate degradation; glycolysis; D-glyceraldehyde 3-phosphate from glycerone phosphate: step 1/1. Involved in the gluconeogenesis. Catalyzes stereospecifically the conversion of dihydroxyacetone phosphate (DHAP) to D-glyceraldehyde-3-phosphate (G3P). This Proteus mirabilis (strain HI4320) protein is Triosephosphate isomerase.